The sequence spans 763 residues: Phosphoglycerol transferase I (763 aa).

A run of 4 helical transmembrane segments spans residues 1–21, 26–46, 77–97, and 108–128; these read MSEL…AWKA, WWFA…ITLF, ILPG…LGWI, and FGYS…SPAF.

This sequence belongs to the OpgB family.

It localises to the cell inner membrane. It carries out the reaction a phosphatidylglycerol + a membrane-derived-oligosaccharide D-glucose = a 1,2-diacyl-sn-glycerol + a membrane-derived-oligosaccharide 6-(glycerophospho)-D-glucose.. It functions in the pathway glycan metabolism; osmoregulated periplasmic glucan (OPG) biosynthesis. In terms of biological role, transfers a phosphoglycerol residue from phosphatidylglycerol to the membrane-bound nascent glucan backbones. In Escherichia coli O7:K1 (strain IAI39 / ExPEC), this protein is Phosphoglycerol transferase I.